Here is a 161-residue protein sequence, read N- to C-terminus: RNA pyrophosphohydrolase (161 aa).

The 147-residue stretch at 9–155 (PYRPCVGVML…KRRVYRQVVD (147 aa)) folds into the Nudix hydrolase domain. The short motif at 44-65 (GGIDDGEELHPAALRELSEETG) is the Nudix box element.

This sequence belongs to the Nudix hydrolase family. RppH subfamily. It depends on a divalent metal cation as a cofactor.

Functionally, accelerates the degradation of transcripts by removing pyrophosphate from the 5'-end of triphosphorylated RNA, leading to a more labile monophosphorylated state that can stimulate subsequent ribonuclease cleavage. This is RNA pyrophosphohydrolase from Novosphingobium aromaticivorans (strain ATCC 700278 / DSM 12444 / CCUG 56034 / CIP 105152 / NBRC 16084 / F199).